We begin with the raw amino-acid sequence, 391 residues long: NADH-quinone oxidoreductase subunit D (391 aa).

This sequence belongs to the complex I 49 kDa subunit family. NDH-1 is composed of 14 different subunits. Subunits NuoB, C, D, E, F, and G constitute the peripheral sector of the complex.

It localises to the cell inner membrane. The enzyme catalyses a quinone + NADH + 5 H(+)(in) = a quinol + NAD(+) + 4 H(+)(out). Functionally, NDH-1 shuttles electrons from NADH, via FMN and iron-sulfur (Fe-S) centers, to quinones in the respiratory chain. The immediate electron acceptor for the enzyme in this species is believed to be ubiquinone. Couples the redox reaction to proton translocation (for every two electrons transferred, four hydrogen ions are translocated across the cytoplasmic membrane), and thus conserves the redox energy in a proton gradient. The chain is NADH-quinone oxidoreductase subunit D from Rickettsia akari (strain Hartford).